The primary structure comprises 52 residues: Metallothionein-2 (52 aa).

2 repeats span residues 43 to 47 and 48 to 52; these read QTCKC.

The protein belongs to the metallothionein superfamily. Type 10 family.

In terms of biological role, the metallothioneins are involved in the cellular sequestration of toxic metal ions. The protein is Metallothionein-2 (MT-II) of Candida glabrata (strain ATCC 2001 / BCRC 20586 / JCM 3761 / NBRC 0622 / NRRL Y-65 / CBS 138) (Yeast).